Consider the following 124-residue polypeptide: Chemotaxis protein CheY1 (124 aa).

In terms of domain architecture, Response regulatory spans 2 to 120; the sequence is KLLVVDDSST…VLKEKLEVVL (119 aa). 4 residues coordinate Mg(2+): D7, D8, D53, and N55. D53 is subject to 4-aspartylphosphate.

Interacts (when phosphorylated) with FliM. It depends on Mg(2+) as a cofactor. Post-translationally, phosphorylated by CheAY. Dephosphorylated (inactivated) by CheZ.

Its subcellular location is the cytoplasm. Functionally, chemotactic response regulator protein that modulates the rotation direction of bacterial flagellar motors. Plays an important role in the colonization and infection of Helicobacter pylori. Upon phosphorylation by CheA, interacts with the flagellar motor protein FliM to cause clockwise flagellar rotation and bacterial reversals, as opposed to straight swimming when CheY1 is not phosphorylated. This chain is Chemotaxis protein CheY1, found in Helicobacter pylori (strain ATCC 700392 / 26695) (Campylobacter pylori).